Reading from the N-terminus, the 1106-residue chain is MTMVTRVIMTDDDSQSLCFLCFLLFFFITAIAVAGDSLDSDREVLLSLKSYLESRNPQNRGLYTEWKMENQDVVCQWPGIICTPQRSRVTGINLTDSTISGPLFKNFSALTELTYLDLSRNTIEGEIPDDLSRCHNLKHLNLSHNILEGELSLPGLSNLEVLDLSLNRITGDIQSSFPLFCNSLVVANLSTNNFTGRIDDIFNGCRNLKYVDFSSNRFSGEVWTGFGRLVEFSVADNHLSGNISASMFRGNCTLQMLDLSGNAFGGEFPGQVSNCQNLNVLNLWGNKFTGNIPAEIGSISSLKGLYLGNNTFSRDIPETLLNLTNLVFLDLSRNKFGGDIQEIFGRFTQVKYLVLHANSYVGGINSSNILKLPNLSRLDLGYNNFSGQLPTEISQIQSLKFLILAYNNFSGDIPQEYGNMPGLQALDLSFNKLTGSIPASFGKLTSLLWLMLANNSLSGEIPREIGNCTSLLWFNVANNQLSGRFHPELTRMGSNPSPTFEVNRQNKDKIIAGSGECLAMKRWIPAEFPPFNFVYAILTKKSCRSLWDHVLKGYGLFPVCSAGSTVRTLKISAYLQLSGNKFSGEIPASISQMDRLSTLHLGFNEFEGKLPPEIGQLPLAFLNLTRNNFSGEIPQEIGNLKCLQNLDLSFNNFSGNFPTSLNDLNELSKFNISYNPFISGAIPTTGQVATFDKDSFLGNPLLRFPSFFNQSGNNTRKISNQVLGNRPRTLLLIWISLALALAFIACLVVSGIVLMVVKASREAEIDLLDGSKTRHDMTSSSGGSSPWLSGKIKVIRLDKSTFTYADILKATSNFSEERVVGRGGYGTVYRGVLPDGREVAVKKLQREGTEAEKEFRAEMEVLSANAFGDWAHPNLVRLYGWCLDGSEKILVHEYMGGGSLEELITDKTKLQWKKRIDIATDVARGLVFLHHECYPSIVHRDVKASNVLLDKHGNARVTDFGLARLLNVGDSHVSTVIAGTIGYVAPEYGQTWQATTRGDVYSYGVLTMELATGRRAVDGGEECLVEWARRVMTGNMTAKGSPITLSGTKPGNGAEQMTELLKIGVKCTADHPQARPNMKEVLAMLVKISGKAELFNGLSSQGYIEM.

The N-terminal stretch at 1–34 is a signal peptide; it reads MTMVTRVIMTDDDSQSLCFLCFLLFFFITAIAVA. Residues 35 to 736 are Extracellular-facing; that stretch reads GDSLDSDREV…PRTLLLIWIS (702 aa). LRR repeat units follow at residues 86 to 109, 110 to 134, 136 to 156, 157 to 182, 184 to 204, 205 to 226, and 227 to 250; these read RSRV…NFSA, LTEL…LSRC, NLKH…LPGL, SNLE…LFCN, LVVA…IFNG, CRNL…WTGF, and GRLV…MFRG. N-linked (GlcNAc...) asparagine glycosylation is found at N93 and N106. N141 carries an N-linked (GlcNAc...) asparagine glycan. N188 and N193 each carry an N-linked (GlcNAc...) asparagine glycan. Residues N242 and N251 are each glycosylated (N-linked (GlcNAc...) asparagine). 15 LRR repeats span residues 252-275, 276-299, 300-323, 325-346, 348-371, 372-396, 398-419, 420-443, 445-468, 470-492, 566-593, 594-617, 619-640, 641-664, and 666-690; these read CTLQ…VSNC, QNLN…IGSI, SSLK…LLNL, NLVF…IFGR, TQVK…NILK, LPNL…ISQI, SLKF…EYGN, MPGL…SFGK, TSLL…IGNC, SLLW…LTRM, VRTL…ISQM, DRLS…IGQL, LAFL…IGNL, KCLQ…LNDL, and ELSK…QVAT. N309 and N322 each carry an N-linked (GlcNAc...) asparagine glycan. N365, N374, N384, and N408 each carry an N-linked (GlcNAc...) asparagine glycan. N454 and N467 each carry an N-linked (GlcNAc...) asparagine glycan. N623, N628, N652, N671, N709, and N713 each carry an N-linked (GlcNAc...) asparagine glycan. Residues 737 to 757 form a helical membrane-spanning segment; the sequence is LALALAFIACLVVSGIVLMVV. Over 758 to 1106 the chain is Cytoplasmic; that stretch reads KASREAEIDL…GLSSQGYIEM (349 aa). Residues T803 and T811 each carry the phosphothreonine modification. A Protein kinase domain is found at 814–1095; sequence FSEERVVGRG…VKISGKAELF (282 aa). Residues 820 to 828 and K842 each bind ATP; that span reads VGRGGYGTV. D941 (proton acceptor) is an active-site residue. Y983 is subject to Phosphotyrosine. T991 carries the phosphothreonine modification.

Belongs to the protein kinase superfamily. Ser/Thr protein kinase family.

It is found in the mitochondrion membrane. The catalysed reaction is L-seryl-[protein] + ATP = O-phospho-L-seryl-[protein] + ADP + H(+). It carries out the reaction L-threonyl-[protein] + ATP = O-phospho-L-threonyl-[protein] + ADP + H(+). The protein is Probable LRR receptor-like serine/threonine-protein kinase At1g74360 of Arabidopsis thaliana (Mouse-ear cress).